The following is a 190-amino-acid chain: Shikimate kinase (190 aa).

15–20 (GSGKST) is a binding site for ATP. Ser-19 lines the Mg(2+) pocket. Asp-37, Arg-61, and Gly-83 together coordinate substrate. Arg-121 contributes to the ATP binding site. Arg-148 lines the substrate pocket.

This sequence belongs to the shikimate kinase family. Monomer. Requires Mg(2+) as cofactor.

Its subcellular location is the cytoplasm. The enzyme catalyses shikimate + ATP = 3-phosphoshikimate + ADP + H(+). Its pathway is metabolic intermediate biosynthesis; chorismate biosynthesis; chorismate from D-erythrose 4-phosphate and phosphoenolpyruvate: step 5/7. Its function is as follows. Catalyzes the specific phosphorylation of the 3-hydroxyl group of shikimic acid using ATP as a cosubstrate. The sequence is that of Shikimate kinase from Chlorobium chlorochromatii (strain CaD3).